The following is a 382-amino-acid chain: uncharacterized protein (382 aa).

This is an uncharacterized protein from Frog virus 3 (isolate Goorha) (FV-3).